The following is a 774-amino-acid chain: Alpha,alpha-trehalose phosphorylase (774 aa).

369-370 serves as a coordination point for substrate; that stretch reads WD. The active-site Proton donor is the glutamate 498. Residue 610–611 coordinates substrate; the sequence is KQ.

It belongs to the glycosyl hydrolase 65 family. In terms of assembly, homodimer.

The catalysed reaction is alpha,alpha-trehalose + phosphate = beta-D-glucose 1-phosphate + D-glucose. Its pathway is glycan degradation; trehalose degradation. Its activity is regulated as follows. Inhibited by Cu(2+), Hg(2+), Mg(2+), Mn(2+), Pb(2+) and Zn(2+). Catalyzes the reversible phosphorolytic cleavage of trehalose. Phosphorolysis is specific for trehalose, but D-xylose, D-galactose, L-arabinose, D-fucose, L-fucose, D-glucosamine and 2-deoxy D-glucose can act as substitutes for D-glucose in the synthetic reaction. The chain is Alpha,alpha-trehalose phosphorylase (treP) from Thermoanaerobacter brockii (Thermoanaerobium brockii).